We begin with the raw amino-acid sequence, 998 residues long: Protein Smaug (998 aa).

Residues 1–37 are compositionally biased toward polar residues; sequence MKYATGTDNAMTSGISGQTNSSNSASNEMQPTTSTPT. Disordered regions lie at residues 1–45, 50–69, and 329–370; these read MKYA…EATS, TATYANGNPNPSANPSQSQP, and LCPA…GSSS. Low complexity predominate over residues 329 to 338; the sequence is LCPASGSRSS. S564 and S575 each carry phosphoserine. An interaction with cup region spans residues 583–763; the sequence is EFKPNYIKFH…KDLKFKLSKM (181 aa). Residues 600–654 form the SAM domain; that stretch reads GIGLWLKSLRLHKYIELFKNMTYEEMLLITEDFLQSVGVTKGASHKLALCIDKLK. 2 disordered regions span residues 773–892 and 943–977; these read HVKP…MQQM and NGSNDNLGLERNQQPQQQQQRKLSGGVSSAEQQPK. Polar residues-rich tracts occupy residues 801–822 and 854–864; these read KSGSNDRINNRKNSNDMLNFSL and HQPQYKSSSYP. S971 carries the post-translational modification Phosphoserine.

It belongs to the SMAUG family. In terms of assembly, interacts with oskar (osk). Binds to the 3'-UTR of nos. Interacts with cup, which in turn recruits eIF4-E, leading to an indirect interaction between smg and eIF4-E that prevents mRNA translation.

It is found in the cytoplasm. Translation regulator that binds to the 3'-UTR of specific mRNAs such as nanos (nos) and prevent their translation. Prevents translation of unlocalized nos in the bulk cytoplasm via the recruitment of cup. The polypeptide is Protein Smaug (Drosophila sechellia (Fruit fly)).